The primary structure comprises 71 residues: Peptide Ctri9819 (71 aa).

The N-terminal stretch at 1 to 23 (MKTVSTVAILAIFLLIVITTIET) is a signal peptide. Leucine amide is present on leucine 34. The propeptide occupies 38–71 (SKLETFKRIARTLSAGISAKRSLEDVNSLTGMSS).

It belongs to the non-disulfide-bridged peptide (NDBP) superfamily. Short antimicrobial peptide (group 4) family. In terms of tissue distribution, expressed by the venom gland.

The protein localises to the secreted. In terms of biological role, antimicrobial peptide. The sequence is that of Peptide Ctri9819 from Chaerilus tricostatus (Scorpion).